Reading from the N-terminus, the 171-residue chain is Prolyl-tRNA synthetase associated domain-containing protein 1 (171 aa).

This sequence belongs to the PRORSD1 family.

The chain is Prolyl-tRNA synthetase associated domain-containing protein 1 (PRORSD1) from Bos taurus (Bovine).